The chain runs to 110 residues: Circadian clock oscillator protein KaiB (110 aa).

This sequence belongs to the KaiB family. As to quaternary structure, the KaiABC complex composition changes during the circadian cycle to control KaiC phosphorylation. Complexes KaiC(6), KaiA(2-4):KaiC(6), KaiB(6):KaiC(6) and KaiC(6):KaiB(6):KaiA(12) are among the most important forms, many form cooperatively. Undergoes a major conformational rearrangment; in the free state forms homotetramers as a dimer of dimers. When bound to the CI domain of KaiC switches to a monomeric thioredoxin-fold (KaiB(fs)). KaiB(fs) binds CikA, leading it to dephosphorylate phospho-RpaA.

Key component of the KaiABC oscillator complex, which constitutes the main circadian regulator in cyanobacteria. Complex composition changes during the circadian cycle to control KaiC phosphorylation. KaiA stimulates KaiC autophosphorylation, while KaiB sequesters KaiA, leading to KaiC autodephosphorylation. Phospho-Ser-431 KaiC accumulation triggers binding of KaiB to form the KaiB(6):KaiC(6) complex, leading to changes in output regulators CikA and SasA. KaiB switches to a thioredoxin-like fold (KaiB(fs)) when bound to KaiC. KaiB(6):KaiC(6) formation exposes a site for KaiA binding that sequesters KaiA from KaiC, making the KaiC(6):KaiB(6):KaiA(12) complex that results in KaiC autodephosphorylation. Its function is as follows. A metamorphic protein which reversibly switches between an inactive tetrameric fold and a rare, thioredoxin-like monomeric fold (KaiB(fs)). KaiB(fs) binds phospho-KaiC, KaiA and CikA. KaiA and CikA compete for binding to KaiB(fs), and KaiB(fs) and SasA compete for binding to KaiC, thus the clock oscillator and output signal pathway are tightly coupled. The polypeptide is Circadian clock oscillator protein KaiB (Synechococcus sp. (strain RCC307)).